We begin with the raw amino-acid sequence, 248 residues long: MNQTNFGFKKVDYTKKQGLVNNVFSNVADKYDLMNDLMSLGLHRLWKDEFIRQIPNLNSHILDVASGSGDIALKLAKKARDRVNNISLTLSDINEEMLKQAKKKAIDLNLFQNLKFTVASAEELPFPDDSFDYYTIAFGIRNVPDINKALKEACRVLKPMGKFICLEFSKVKEGYIKDFYKFYSFNIIPSIGQMIAGNKEAYEYLVESIDLFPSQDEFRIMIKDAGFEEVGYKNLSGGIVAIHSAYIQ.

Ser-68 and Asp-92 together coordinate S-adenosyl-L-methionine.

It belongs to the class I-like SAM-binding methyltransferase superfamily. MenG/UbiE family.

The enzyme catalyses a 2-demethylmenaquinol + S-adenosyl-L-methionine = a menaquinol + S-adenosyl-L-homocysteine + H(+). The catalysed reaction is a 2-methoxy-6-(all-trans-polyprenyl)benzene-1,4-diol + S-adenosyl-L-methionine = a 5-methoxy-2-methyl-3-(all-trans-polyprenyl)benzene-1,4-diol + S-adenosyl-L-homocysteine + H(+). It participates in quinol/quinone metabolism; menaquinone biosynthesis; menaquinol from 1,4-dihydroxy-2-naphthoate: step 2/2. The protein operates within cofactor biosynthesis; ubiquinone biosynthesis. Methyltransferase required for the conversion of demethylmenaquinol (DMKH2) to menaquinol (MKH2) and the conversion of 2-polyprenyl-6-methoxy-1,4-benzoquinol (DDMQH2) to 2-polyprenyl-3-methyl-6-methoxy-1,4-benzoquinol (DMQH2). The sequence is that of Ubiquinone/menaquinone biosynthesis C-methyltransferase UbiE from Rickettsia conorii (strain ATCC VR-613 / Malish 7).